Reading from the N-terminus, the 470-residue chain is Neuronal acetylcholine receptor subunit beta-4 (470 aa).

A signal peptide spans 1–3 (STA). The Extracellular portion of the chain corresponds to 4 to 216 (ADAEEKLMNH…IIKRKPLFYT (213 aa)). N-linked (GlcNAc...) asparagine glycans are attached at residues Asn-29, Asn-118, and Asn-146. Cys-133 and Cys-147 are oxidised to a cystine. The helical transmembrane segment at 217–237 (INLIIPCVLITSLAILVFYLP) threads the bilayer. Topologically, residues 238 to 245 (SDCGEKMT) are cytoplasmic. A Na(+)-binding site is contributed by Glu-242. The chain crosses the membrane as a helical span at residues 246 to 266 (LCISVLLALTVFLLLISKIVP). Residues 267–278 (PTSLDVPLIGKY) are Extracellular-facing. The helical transmembrane segment at 279–299 (LMFTMVLVTFSIVTSVCVLNV) threads the bilayer. The Cytoplasmic portion of the chain corresponds to 300 to 438 (HHRSPSTHTM…WKYVAMVVDR (139 aa)). Residues 439-459 (LFLWIFVLVCVLGTVGLFLQP) traverse the membrane as a helical segment. Topologically, residues 460–470 (LFQNHIAATNP) are extracellular.

This sequence belongs to the ligand-gated ion channel (TC 1.A.9) family. Acetylcholine receptor (TC 1.A.9.1) subfamily. Beta-4/CHRNB4 sub-subfamily. As to quaternary structure, neuronal AChR is composed of two different types of subunits: alpha and beta. CHRNB4/Beta-4 subunit can be combined to CHRNA2/alpha-2, CHRNA3/alpha-3 or CHRNA4/alpha-4, CHRNA5/alpha-5 and CHRNB3/beta-3 to give rise to functional receptors.

It localises to the synaptic cell membrane. Its subcellular location is the cell membrane. It catalyses the reaction Ca(2+)(in) = Ca(2+)(out). The catalysed reaction is K(+)(in) = K(+)(out). The enzyme catalyses Na(+)(in) = Na(+)(out). Its activity is regulated as follows. Activated by a myriad of ligands such as acetylcholine, cytisine, nicotine, choline and epibatidine. The heteropentamer CHRNA3:CHRNB4 activity is blocked by the alpha-conotoxin ImI and AuIB. Its function is as follows. Component of neuronal acetylcholine receptors (nAChRs) that function as pentameric, ligand-gated cation channels with high calcium permeability among other activities. nAChRs are excitatory neurotrasnmitter receptors formed by a collection of nAChR subunits known to mediate synaptic transmission in the nervous system and the neuromuscular junction. Each nAchR subunit confers differential attributes to channel properties, including activation, deactivation and desensitization kinetics, pH sensitivity, cation permeability, and binding to allosteric modulators. CHRNB4 forms heteropentameric neuronal acetylcholine receptors with CHRNA2, CHRNA3 and CHRNA4, as well as CHRNA5 and CHRNB3 as accesory subunits. CHRNA3:CHRNB4 being predominant in neurons of the autonomic ganglia, it is known as ganglionic nicotinic receptor. CHRNA3:CHRNB4 or CHRNA3:CHRNA5:CHRNB4 play also an important role in the habenulo-interpeduncular tract, modulating the mesolimbic dopamine system and affecting reward circuits and addiction. Hypothalamic CHRNA3:CHRNB4 nAChR activation by nicotine leads to activation of POMC neurons and a decrease in food intake. In Gallus gallus (Chicken), this protein is Neuronal acetylcholine receptor subunit beta-4 (CHRNB4).